The chain runs to 373 residues: S-adenosylmethionine:tRNA ribosyltransferase-isomerase (373 aa).

It belongs to the QueA family. Monomer.

The protein localises to the cytoplasm. The enzyme catalyses 7-aminomethyl-7-carbaguanosine(34) in tRNA + S-adenosyl-L-methionine = epoxyqueuosine(34) in tRNA + adenine + L-methionine + 2 H(+). Its pathway is tRNA modification; tRNA-queuosine biosynthesis. Transfers and isomerizes the ribose moiety from AdoMet to the 7-aminomethyl group of 7-deazaguanine (preQ1-tRNA) to give epoxyqueuosine (oQ-tRNA). The chain is S-adenosylmethionine:tRNA ribosyltransferase-isomerase from Caulobacter sp. (strain K31).